A 209-amino-acid polypeptide reads, in one-letter code: Large ribosomal subunit protein uL3 (209 aa).

A disordered region spans residues 132–153; that stretch reads ATHGNSLSHRVPGSIGQNQTPG. Glutamine 150 carries the N5-methylglutamine modification.

The protein belongs to the universal ribosomal protein uL3 family. Part of the 50S ribosomal subunit. Forms a cluster with proteins L14 and L19. In terms of processing, methylated by PrmB.

Its function is as follows. One of the primary rRNA binding proteins, it binds directly near the 3'-end of the 23S rRNA, where it nucleates assembly of the 50S subunit. This is Large ribosomal subunit protein uL3 from Enterobacter sp. (strain 638).